The following is a 206-amino-acid chain: Small ribosomal subunit protein uS4 (206 aa).

One can recognise an S4 RNA-binding domain in the interval 96-160 (CRLDNVVYRM…AQLRIVQALE (65 aa)).

Belongs to the universal ribosomal protein uS4 family. Part of the 30S ribosomal subunit. Contacts protein S5. The interaction surface between S4 and S5 is involved in control of translational fidelity.

One of the primary rRNA binding proteins, it binds directly to 16S rRNA where it nucleates assembly of the body of the 30S subunit. Functionally, with S5 and S12 plays an important role in translational accuracy. This Pseudomonas putida (strain GB-1) protein is Small ribosomal subunit protein uS4.